Here is a 695-residue protein sequence, read N- to C-terminus: NADPH--cytochrome P450 reductase (695 aa).

Residues 1–8 (MAQLDTLD) are Lumenal-facing. The helical transmembrane segment at 9 to 31 (VVVLAVLLAGSIAYFTKGTFWAV) threads the bilayer. The Cytoplasmic segment spans residues 32-695 (AKDPYASSGP…SGSYQEDVWS (664 aa)). The Flavodoxin-like domain occupies 66–221 (CVIFYGSQTG…DFLAWKEPMW (156 aa)). Residues 72-77 (SQTGTA), 123-126 (ATYG), 169-178 (LGNNTYEHYN), and aspartate 204 each bind FMN. One can recognise an FAD-binding FR-type domain in the interval 277 to 538 (HNPYIAPIVE…HVRHSNFKLP (262 aa)). Arginine 296 is an NADP(+) binding site. Residues 451-454 (RYYS), 469-471 (TAV), and 486-489 (GVTT) contribute to the FAD site. The segment at 497-516 (QKQNGDPSPDPHGQTYAING) is disordered. NADP(+) contacts are provided by residues threonine 552, 614-615 (SR), 620-624 (KVYVQ), and glutamate 656. Tryptophan 694 is an FAD binding site.

It belongs to the NADPH--cytochrome P450 reductase family. In the N-terminal section; belongs to the flavodoxin family. The protein in the C-terminal section; belongs to the flavoprotein pyridine nucleotide cytochrome reductase family. Requires FAD as cofactor. The cofactor is FMN.

The protein resides in the endoplasmic reticulum membrane. It is found in the mitochondrion outer membrane. The protein localises to the cell membrane. It catalyses the reaction 2 oxidized [cytochrome P450] + NADPH = 2 reduced [cytochrome P450] + NADP(+) + H(+). Functionally, this enzyme is required for electron transfer from NADP to cytochrome P450 in microsomes. It can also provide electron transfer to heme oxygenase and cytochrome B5. Involved in ergosterol biosynthesis. This is NADPH--cytochrome P450 reductase from Emericella nidulans (strain FGSC A4 / ATCC 38163 / CBS 112.46 / NRRL 194 / M139) (Aspergillus nidulans).